The following is a 356-amino-acid chain: Homoserine O-succinyltransferase (356 aa).

The active-site Acyl-thioester intermediate is Cys-146. Lys-167 and Ser-196 together coordinate substrate. Catalysis depends on His-239, which acts as the Proton acceptor. The active site involves Glu-241. Arg-253 is a substrate binding site.

The protein belongs to the MetA family.

The protein resides in the cytoplasm. The enzyme catalyses L-homoserine + succinyl-CoA = O-succinyl-L-homoserine + CoA. Its pathway is amino-acid biosynthesis; L-methionine biosynthesis via de novo pathway; O-succinyl-L-homoserine from L-homoserine: step 1/1. In terms of biological role, transfers a succinyl group from succinyl-CoA to L-homoserine, forming succinyl-L-homoserine. This chain is Homoserine O-succinyltransferase, found in Thioalkalivibrio nitratireducens (strain DSM 14787 / UNIQEM 213 / ALEN2).